Consider the following 296-residue polypeptide: Transmembrane protein 156 (296 aa).

Over 1–4 (MTKT) the chain is Cytoplasmic. The helical transmembrane segment at 5–25 (ALLKLFVAIVITFILILPEYF) threads the bilayer. At 26–211 (KTPKERTLEL…EMDIKNITCS (186 aa)) the chain is on the extracellular side. Asn45 and Asn156 each carry an N-linked (GlcNAc...) asparagine glycan. The chain crosses the membrane as a helical span at residues 212 to 232 (MKITWYILVLLVFIFLIILTI). Residues 233–296 (RKILEGQRRV…QEVLPPIPEL (64 aa)) are Cytoplasmic-facing.

It is found in the membrane. This Homo sapiens (Human) protein is Transmembrane protein 156 (TMEM156).